The following is a 101-amino-acid chain: Aspartyl/glutamyl-tRNA(Asn/Gln) amidotransferase subunit C (101 aa).

This sequence belongs to the GatC family. As to quaternary structure, heterotrimer of A, B and C subunits.

The enzyme catalyses L-glutamyl-tRNA(Gln) + L-glutamine + ATP + H2O = L-glutaminyl-tRNA(Gln) + L-glutamate + ADP + phosphate + H(+). It catalyses the reaction L-aspartyl-tRNA(Asn) + L-glutamine + ATP + H2O = L-asparaginyl-tRNA(Asn) + L-glutamate + ADP + phosphate + 2 H(+). Its function is as follows. Allows the formation of correctly charged Asn-tRNA(Asn) or Gln-tRNA(Gln) through the transamidation of misacylated Asp-tRNA(Asn) or Glu-tRNA(Gln) in organisms which lack either or both of asparaginyl-tRNA or glutaminyl-tRNA synthetases. The reaction takes place in the presence of glutamine and ATP through an activated phospho-Asp-tRNA(Asn) or phospho-Glu-tRNA(Gln). The polypeptide is Aspartyl/glutamyl-tRNA(Asn/Gln) amidotransferase subunit C (Lactobacillus delbrueckii subsp. bulgaricus (strain ATCC 11842 / DSM 20081 / BCRC 10696 / JCM 1002 / NBRC 13953 / NCIMB 11778 / NCTC 12712 / WDCM 00102 / Lb 14)).